Consider the following 491-residue polypeptide: Protein nucleotidyltransferase YdiU (491 aa).

Gly92, Gly94, Arg95, Lys115, Asp127, Gly128, Arg178, and Arg185 together coordinate ATP. The Proton acceptor role is filled by Asp254. The Mg(2+) site is built by Asn255 and Asp264. An ATP-binding site is contributed by Asp264.

The protein belongs to the SELO family. Requires Mg(2+) as cofactor. The cofactor is Mn(2+).

It catalyses the reaction L-seryl-[protein] + ATP = 3-O-(5'-adenylyl)-L-seryl-[protein] + diphosphate. The enzyme catalyses L-threonyl-[protein] + ATP = 3-O-(5'-adenylyl)-L-threonyl-[protein] + diphosphate. The catalysed reaction is L-tyrosyl-[protein] + ATP = O-(5'-adenylyl)-L-tyrosyl-[protein] + diphosphate. It carries out the reaction L-histidyl-[protein] + UTP = N(tele)-(5'-uridylyl)-L-histidyl-[protein] + diphosphate. It catalyses the reaction L-seryl-[protein] + UTP = O-(5'-uridylyl)-L-seryl-[protein] + diphosphate. The enzyme catalyses L-tyrosyl-[protein] + UTP = O-(5'-uridylyl)-L-tyrosyl-[protein] + diphosphate. In terms of biological role, nucleotidyltransferase involved in the post-translational modification of proteins. It can catalyze the addition of adenosine monophosphate (AMP) or uridine monophosphate (UMP) to a protein, resulting in modifications known as AMPylation and UMPylation. This is Protein nucleotidyltransferase YdiU from Mycolicibacterium paratuberculosis (strain ATCC BAA-968 / K-10) (Mycobacterium paratuberculosis).